The sequence spans 70 residues: Small ribosomal subunit protein bS21 (70 aa).

This sequence belongs to the bacterial ribosomal protein bS21 family.

The protein is Small ribosomal subunit protein bS21 of Cupriavidus pinatubonensis (strain JMP 134 / LMG 1197) (Cupriavidus necator (strain JMP 134)).